The sequence spans 672 residues: Penicillin-binding protein activator LpoA (672 aa).

A signal peptide spans 1–26 (MLPFHLVRTQAGRVIPVLLAALFLAG). C27 carries the N-palmitoyl cysteine lipid modification. C27 is lipidated: S-diacylglycerol cysteine. Residues 298 to 336 (APPTDTAQAGQVTPSSDGQNAQSPAPYSDQAVASTTPAP) form a disordered region. Positions 305–322 (QAGQVTPSSDGQNAQSPA) are enriched in polar residues. Residues 327–336 (QAVASTTPAP) show a composition bias toward low complexity.

It belongs to the LpoA family. As to quaternary structure, interacts with PBP1a.

Its subcellular location is the cell outer membrane. Its function is as follows. Regulator of peptidoglycan synthesis that is essential for the function of penicillin-binding protein 1A (PBP1a). The protein is Penicillin-binding protein activator LpoA of Pectobacterium parmentieri (strain WPP163) (Pectobacterium wasabiae (strain WPP163)).